The primary structure comprises 179 residues: ATP synthase subunit delta (179 aa).

It belongs to the ATPase delta chain family. As to quaternary structure, F-type ATPases have 2 components, F(1) - the catalytic core - and F(0) - the membrane proton channel. F(1) has five subunits: alpha(3), beta(3), gamma(1), delta(1), epsilon(1). F(0) has three main subunits: a(1), b(2) and c(10-14). The alpha and beta chains form an alternating ring which encloses part of the gamma chain. F(1) is attached to F(0) by a central stalk formed by the gamma and epsilon chains, while a peripheral stalk is formed by the delta and b chains.

Its subcellular location is the cell inner membrane. Functionally, f(1)F(0) ATP synthase produces ATP from ADP in the presence of a proton or sodium gradient. F-type ATPases consist of two structural domains, F(1) containing the extramembraneous catalytic core and F(0) containing the membrane proton channel, linked together by a central stalk and a peripheral stalk. During catalysis, ATP synthesis in the catalytic domain of F(1) is coupled via a rotary mechanism of the central stalk subunits to proton translocation. This protein is part of the stalk that links CF(0) to CF(1). It either transmits conformational changes from CF(0) to CF(1) or is implicated in proton conduction. The chain is ATP synthase subunit delta from Acidithiobacillus ferrooxidans (strain ATCC 23270 / DSM 14882 / CIP 104768 / NCIMB 8455) (Ferrobacillus ferrooxidans (strain ATCC 23270)).